A 168-amino-acid polypeptide reads, in one-letter code: 2-C-methyl-D-erythritol 2,4-cyclodiphosphate synthase (168 aa).

The a divalent metal cation site is built by D13 and H15. Residues 13-15 and 39-40 each bind 4-CDP-2-C-methyl-D-erythritol 2-phosphate; these read DVH and HS. H47 contacts a divalent metal cation. 4-CDP-2-C-methyl-D-erythritol 2-phosphate contacts are provided by residues 61 to 63, 66 to 70, F144, and K147; these read DIG and FPDTD.

The protein belongs to the IspF family. In terms of assembly, homotrimer. Requires a divalent metal cation as cofactor.

The catalysed reaction is 4-CDP-2-C-methyl-D-erythritol 2-phosphate = 2-C-methyl-D-erythritol 2,4-cyclic diphosphate + CMP. Its pathway is isoprenoid biosynthesis; isopentenyl diphosphate biosynthesis via DXP pathway; isopentenyl diphosphate from 1-deoxy-D-xylulose 5-phosphate: step 4/6. Involved in the biosynthesis of isopentenyl diphosphate (IPP) and dimethylallyl diphosphate (DMAPP), two major building blocks of isoprenoid compounds. Catalyzes the conversion of 4-diphosphocytidyl-2-C-methyl-D-erythritol 2-phosphate (CDP-ME2P) to 2-C-methyl-D-erythritol 2,4-cyclodiphosphate (ME-CPP) with a corresponding release of cytidine 5-monophosphate (CMP). The chain is 2-C-methyl-D-erythritol 2,4-cyclodiphosphate synthase from Ralstonia pickettii (strain 12J).